A 421-amino-acid chain; its full sequence is CinA-like protein (421 aa).

This sequence belongs to the CinA family.

The protein is CinA-like protein of Synechococcus sp. (strain ATCC 27144 / PCC 6301 / SAUG 1402/1) (Anacystis nidulans).